The following is a 354-amino-acid chain: tRNA-specific 2-thiouridylase MnmA (354 aa).

ATP-binding positions include 7–14 (AMSGGVDS) and Met-33. Cys-94 (nucleophile) is an active-site residue. Residues Cys-94 and Cys-192 are joined by a disulfide bond. Residue Gly-118 coordinates ATP. Positions 141-143 (KDQ) are interaction with tRNA. Catalysis depends on Cys-192, which acts as the Cysteine persulfide intermediate. An interaction with tRNA region spans residues 296 to 297 (RY).

It belongs to the MnmA/TRMU family.

It is found in the cytoplasm. It carries out the reaction S-sulfanyl-L-cysteinyl-[protein] + uridine(34) in tRNA + AH2 + ATP = 2-thiouridine(34) in tRNA + L-cysteinyl-[protein] + A + AMP + diphosphate + H(+). Catalyzes the 2-thiolation of uridine at the wobble position (U34) of tRNA, leading to the formation of s(2)U34. The polypeptide is tRNA-specific 2-thiouridylase MnmA (Trichlorobacter lovleyi (strain ATCC BAA-1151 / DSM 17278 / SZ) (Geobacter lovleyi)).